The sequence spans 326 residues: Vitamin B12 import system permease protein BtuC (326 aa).

9 helical membrane-spanning segments follow: residues 15–35 (WLLC…CAGE), 61–81 (LAVL…QALF), 88–108 (PGLL…VLLG), 112–132 (LPNW…TLIL), 146–166 (LLAG…AIYF), 184–204 (GGVD…LLWI), 240–260 (GWMV…GLVI), 274–294 (VLLP…DVVA), and 302–322 (ELPI…WLLL).

This sequence belongs to the binding-protein-dependent transport system permease family. FecCD subfamily. In terms of assembly, the complex is composed of two ATP-binding proteins (BtuD), two transmembrane proteins (BtuC) and a solute-binding protein (BtuF).

It localises to the cell inner membrane. Part of the ABC transporter complex BtuCDF involved in vitamin B12 import. Involved in the translocation of the substrate across the membrane. This is Vitamin B12 import system permease protein BtuC from Escherichia coli (strain SE11).